The chain runs to 508 residues: Maturase K (508 aa).

It belongs to the intron maturase 2 family. MatK subfamily.

The protein localises to the plastid. The protein resides in the chloroplast. Usually encoded in the trnK tRNA gene intron. Probably assists in splicing its own and other chloroplast group II introns. The polypeptide is Maturase K (Antirrhinum majus (Garden snapdragon)).